Here is a 419-residue protein sequence, read N- to C-terminus: Serine hydroxymethyltransferase (419 aa).

(6S)-5,6,7,8-tetrahydrofolate-binding positions include leucine 121 and 125-127; that span reads GHL. The residue at position 229 (lysine 229) is an N6-(pyridoxal phosphate)lysine. 354 to 356 contacts (6S)-5,6,7,8-tetrahydrofolate; it reads SPF.

The protein belongs to the SHMT family. As to quaternary structure, homodimer. It depends on pyridoxal 5'-phosphate as a cofactor.

Its subcellular location is the cytoplasm. It carries out the reaction (6R)-5,10-methylene-5,6,7,8-tetrahydrofolate + glycine + H2O = (6S)-5,6,7,8-tetrahydrofolate + L-serine. It functions in the pathway one-carbon metabolism; tetrahydrofolate interconversion. Its pathway is amino-acid biosynthesis; glycine biosynthesis; glycine from L-serine: step 1/1. Catalyzes the reversible interconversion of serine and glycine with tetrahydrofolate (THF) serving as the one-carbon carrier. This reaction serves as the major source of one-carbon groups required for the biosynthesis of purines, thymidylate, methionine, and other important biomolecules. Also exhibits THF-independent aldolase activity toward beta-hydroxyamino acids, producing glycine and aldehydes, via a retro-aldol mechanism. This chain is Serine hydroxymethyltransferase, found in Coxiella burnetii (strain CbuG_Q212) (Coxiella burnetii (strain Q212)).